The primary structure comprises 159 residues: Protein-export protein SecB (159 aa).

This sequence belongs to the SecB family. Homotetramer, a dimer of dimers. One homotetramer interacts with 1 SecA dimer.

Its subcellular location is the cytoplasm. Its function is as follows. One of the proteins required for the normal export of preproteins out of the cell cytoplasm. It is a molecular chaperone that binds to a subset of precursor proteins, maintaining them in a translocation-competent state. It also specifically binds to its receptor SecA. This chain is Protein-export protein SecB, found in Nitrobacter winogradskyi (strain ATCC 25391 / DSM 10237 / CIP 104748 / NCIMB 11846 / Nb-255).